We begin with the raw amino-acid sequence, 552 residues long: CTP synthase (552 aa).

Residues Met1–Leu270 are amidoligase domain. Ser13 is a CTP binding site. A UTP-binding site is contributed by Ser13. ATP contacts are provided by residues Ser14–Ile19 and Asp71. Residues Asp71 and Glu144 each contribute to the Mg(2+) site. CTP is bound by residues Asp151 to Glu153, Lys191 to Gln196, and Lys227. Residues Lys191–Gln196 and Lys227 each bind UTP. The Glutamine amidotransferase type-1 domain occupies Lys295–Ala548. Gly357 lines the L-glutamine pocket. Cys384 functions as the Nucleophile; for glutamine hydrolysis in the catalytic mechanism. L-glutamine-binding positions include Leu385–Gln388, Glu408, and Arg474. Active-site residues include His521 and Glu523.

It belongs to the CTP synthase family. In terms of assembly, homotetramer.

It catalyses the reaction UTP + L-glutamine + ATP + H2O = CTP + L-glutamate + ADP + phosphate + 2 H(+). The catalysed reaction is L-glutamine + H2O = L-glutamate + NH4(+). The enzyme catalyses UTP + NH4(+) + ATP = CTP + ADP + phosphate + 2 H(+). Its pathway is pyrimidine metabolism; CTP biosynthesis via de novo pathway; CTP from UDP: step 2/2. Allosterically activated by GTP, when glutamine is the substrate; GTP has no effect on the reaction when ammonia is the substrate. The allosteric effector GTP functions by stabilizing the protein conformation that binds the tetrahedral intermediate(s) formed during glutamine hydrolysis. Inhibited by the product CTP, via allosteric rather than competitive inhibition. In terms of biological role, catalyzes the ATP-dependent amination of UTP to CTP with either L-glutamine or ammonia as the source of nitrogen. Regulates intracellular CTP levels through interactions with the four ribonucleotide triphosphates. The sequence is that of CTP synthase from Delftia acidovorans (strain DSM 14801 / SPH-1).